The chain runs to 175 residues: Sec-independent protein translocase protein TatB (175 aa).

A helical membrane pass occupies residues 1-21 (MLDLGLSKMALIGVVALVVLG). Over residues 94 to 115 (SAVSPGGSAAADAPDGPSAASG) the composition is skewed to low complexity. Disordered regions lie at residues 94-118 (SAVS…GEPS) and 153-175 (VQSG…ARFL). Positions 160–175 (VARHRPASLRRPARFL) are enriched in basic residues.

It belongs to the TatB family. In terms of assembly, the Tat system comprises two distinct complexes: a TatABC complex, containing multiple copies of TatA, TatB and TatC subunits, and a separate TatA complex, containing only TatA subunits. Substrates initially bind to the TatABC complex, which probably triggers association of the separate TatA complex to form the active translocon.

Its subcellular location is the cell inner membrane. In terms of biological role, part of the twin-arginine translocation (Tat) system that transports large folded proteins containing a characteristic twin-arginine motif in their signal peptide across membranes. Together with TatC, TatB is part of a receptor directly interacting with Tat signal peptides. TatB may form an oligomeric binding site that transiently accommodates folded Tat precursor proteins before their translocation. This is Sec-independent protein translocase protein TatB from Burkholderia pseudomallei (strain 1106a).